Reading from the N-terminus, the 685-residue chain is MQRSSGINNLHIPTSPMSFSSNGINLPGSMVLDGSPSMQHLPQQQQRQLLEQQAGQGSVPMRENSYSHVDKKLRLEVKQEDLLQQQILQQLIQRQDPTGRNPQMQALLQQQRVRQHQQMLQSMSPSQRLQLQKQQQLRQQLQQQGTQQISPNVRPYEVGVCARKLMMYLYHLQQRPAENCITYWRKFVAEYFSPRAKQRLCLSQYESVGHHALGMFPQAAPDMWQCDLCGTKSGKGFEATFDVLARLIEIKFASGIIDELLYLDHPRENRFPNGLMMLEYRKAVQETVHEQFRVVREGHLRIIFSPDLKILSWEFCARRHEELLLRRLIAPQVNQLLQVAQKCQSTISESGSQGVSQQDIQSNSNMVLGAGRQLAKFMELQSLNDLGYPKRYIRTLQISEVVKSMKDLMNFTGEHKVGPLEGLKQLLEQTATVKLQRQKMQEMEQFGNSGAMSGPAQAQMTLSSGTMSGSTANNNSNNHHQIVGRGAMNGSPQATAALTNYQSMLIRQNAMNNQNSNTGNQEGFSSQNPTLNSNQSPSSSSQQRENLATSGFPSSPQMQQQQHILNGTPNMLPQNHPHQLQSPHSHGNTQEQQMLHQLLQEMTENGASVEQQQAFPGQSGSNNNTERNTTASTSNISGGGRVPSRINSFKASSNNNLPFSEDISVTDHDFSEDGFFNNSDIYGGL.

Disordered regions lie at residues 25-66 and 108-129; these read NLPG…ENSY and LQQQ…SQRL. Residues 39–56 show a composition bias toward low complexity; it reads QHLPQQQQRQLLEQQAGQ. The segment at 176-423 is dimerization; the sequence is PAENCITYWR…EHKVGPLEGL (248 aa). Residues 185-199 carry the Nuclear localization signal motif; the sequence is RKFVAEYFSPRAKQR. Positions 447-459 are enriched in polar residues; the sequence is GNSGAMSGPAQAQ. Disordered stretches follow at residues 447–491, 512–591, and 611–658; these read GNSG…MNGS, NNQN…NTQE, and QQQA…NNLP. Residues 460–471 show a composition bias toward low complexity; that stretch reads MTLSSGTMSGST. Polar residues predominate over residues 512 to 524; that stretch reads NNQNSNTGNQEGF. Low complexity predominate over residues 525 to 543; that stretch reads SSQNPTLNSNQSPSSSSQQ. Polar residues-rich tracts occupy residues 544–588, 611–636, and 645–658; these read RENL…SHGN, QQQA…TSNI, and RINS…NNLP.

It belongs to the adn1/SEU family.

The protein resides in the nucleus. Probable transcription regulator that functions in the development of the carpel margin meristem similarly to SEUSS (SEU). In association with SEU, supports organ development from meristematic regions by facilitating auxin response and thus organ initiation, and by sustaining meristematic potential through the maintenance of PHABULOSA expression. In Arabidopsis thaliana (Mouse-ear cress), this protein is Probable transcriptional regulator SLK3 (SLK3).